The sequence spans 154 residues: Iron-sulfur cluster assembly 2 homolog, mitochondrial (154 aa).

The N-terminal 8 residues, 1–8 (MAASRALS), are a transit peptide targeting the mitochondrion. 3 residues coordinate Fe cation: Cys79, Cys144, and Cys146.

The protein belongs to the HesB/IscA family. Heterotetramer; forms a dimer of dimers with IBA57. Interacts with [2Fe-2S]-ISCA2 forming the heterodimer [2Fe- 2S]-ISCA2-IBA57 complex; [2Fe-2S] cluster binding is absolutely required to promote the complex formation.

Its subcellular location is the mitochondrion. In terms of biological role, involved in the maturation of mitochondrial 4Fe-4S proteins functioning late in the iron-sulfur cluster assembly pathway. May be involved in the binding of an intermediate of Fe/S cluster assembly. This Mus musculus (Mouse) protein is Iron-sulfur cluster assembly 2 homolog, mitochondrial (Isca2).